The primary structure comprises 360 residues: Alanine racemase (360 aa).

K34 (proton acceptor; specific for D-alanine) is an active-site residue. At K34 the chain carries N6-(pyridoxal phosphate)lysine. R129 lines the substrate pocket. Y254 serves as the catalytic Proton acceptor; specific for L-alanine. M302 is a substrate binding site.

This sequence belongs to the alanine racemase family. Requires pyridoxal 5'-phosphate as cofactor.

The catalysed reaction is L-alanine = D-alanine. The protein operates within amino-acid biosynthesis; D-alanine biosynthesis; D-alanine from L-alanine: step 1/1. Its function is as follows. Catalyzes the interconversion of L-alanine and D-alanine. May also act on other amino acids. In Pectobacterium atrosepticum (strain SCRI 1043 / ATCC BAA-672) (Erwinia carotovora subsp. atroseptica), this protein is Alanine racemase (alr).